The chain runs to 190 residues: Glutathione peroxidase 2 (190 aa).

Residue selenocysteine 40 is part of the active site. A non-standard amino acid (selenocysteine) is located at residue selenocysteine 40.

It belongs to the glutathione peroxidase family. In terms of assembly, homotetramer.

Its subcellular location is the cytoplasm. The protein resides in the cytosol. It carries out the reaction 2 glutathione + H2O2 = glutathione disulfide + 2 H2O. The enzyme catalyses a hydroperoxy polyunsaturated fatty acid + 2 glutathione = a hydroxy polyunsaturated fatty acid + glutathione disulfide + H2O. It catalyses the reaction tert-butyl hydroperoxide + 2 glutathione = tert-butanol + glutathione disulfide + H2O. The catalysed reaction is cumene hydroperoxide + 2 glutathione = 2-phenylpropan-2-ol + glutathione disulfide + H2O. It carries out the reaction (13S)-hydroperoxy-(9Z,11E)-octadecadienoate + 2 glutathione = (13S)-hydroxy-(9Z,11E)-octadecadienoate + glutathione disulfide + H2O. The enzyme catalyses (5S)-hydroperoxy-(6E,8Z,11Z,14Z)-eicosatetraenoate + 2 glutathione = (5S)-hydroxy-(6E,8Z,11Z,14Z)-eicosatetraenoate + glutathione disulfide + H2O. It catalyses the reaction (12R)-hydroperoxy-(5Z,8Z,10E,14Z)-eicosatetraenoate + 2 glutathione = (12R)-hydroxy-(5Z,8Z,10E,14Z)-eicosatetraenoate + glutathione disulfide + H2O. The catalysed reaction is (15S)-hydroperoxy-(5Z,8Z,11Z,13E)-eicosatetraenoate + 2 glutathione = (15S)-hydroxy-(5Z,8Z,11Z,13E)-eicosatetraenoate + glutathione disulfide + H2O. Catalyzes the reduction of hydroperoxides in a glutathione-dependent manner thus regulating cellular redox homeostasis. Can reduce small soluble hydroperoxides such as H2O2, cumene hydroperoxide and tert-butyl hydroperoxide, as well as several fatty acid-derived hydroperoxides. Cannot reduce phosphatidycholine hydroperoxide. In Sapajus apella (Brown-capped capuchin), this protein is Glutathione peroxidase 2 (GPX2).